Here is a 73-residue protein sequence, read N- to C-terminus: RNA-binding protein Hfq (73 aa).

The region spanning 8–68 (DQFLNQIRKE…ISTFAPQKNV (61 aa)) is the Sm domain.

This sequence belongs to the Hfq family. Homohexamer.

RNA chaperone that binds small regulatory RNA (sRNAs) and mRNAs to facilitate mRNA translational regulation in response to envelope stress, environmental stress and changes in metabolite concentrations. Also binds with high specificity to tRNAs. The sequence is that of RNA-binding protein Hfq from Bacillus subtilis (strain 168).